The sequence spans 89 residues: Three-finger toxin 3 (89 aa).

Residues 1–16 (MKTLLLILGVVAFVYL) form the signal peptide. Cystine bridges form between Cys24/Cys47, Cys40/Cys66, Cys70/Cys81, and Cys82/Cys87.

The protein belongs to the three-finger toxin family. Ancestral subfamily. As to expression, expressed by the venom gland.

It localises to the secreted. The chain is Three-finger toxin 3 from Sistrurus catenatus edwardsii (Desert massasauga).